Reading from the N-terminus, the 424-residue chain is Glutamyl-tRNA reductase (424 aa).

Substrate contacts are provided by residues 50 to 53 (TCNR), Ser-98, 103 to 105 (EDQ), and Gln-109. Cys-51 functions as the Nucleophile in the catalytic mechanism. 178-183 (GSGEMG) is an NADP(+) binding site.

Belongs to the glutamyl-tRNA reductase family. Homodimer.

The catalysed reaction is (S)-4-amino-5-oxopentanoate + tRNA(Glu) + NADP(+) = L-glutamyl-tRNA(Glu) + NADPH + H(+). The protein operates within porphyrin-containing compound metabolism; protoporphyrin-IX biosynthesis; 5-aminolevulinate from L-glutamyl-tRNA(Glu): step 1/2. In terms of biological role, catalyzes the NADPH-dependent reduction of glutamyl-tRNA(Glu) to glutamate 1-semialdehyde (GSA). The polypeptide is Glutamyl-tRNA reductase (Methanoregula boonei (strain DSM 21154 / JCM 14090 / 6A8)).